A 160-amino-acid polypeptide reads, in one-letter code: 6,7-dimethyl-8-ribityllumazine synthase (160 aa).

5-amino-6-(D-ribitylamino)uracil contacts are provided by residues Trp-27, 59–61, and 81–83; these read AIE and VVI. 86 to 87 contributes to the (2S)-2-hydroxy-3-oxobutyl phosphate binding site; the sequence is QT. Catalysis depends on His-89, which acts as the Proton donor. Asn-114 is a binding site for 5-amino-6-(D-ribitylamino)uracil. Arg-128 contributes to the (2S)-2-hydroxy-3-oxobutyl phosphate binding site.

It belongs to the DMRL synthase family. In terms of assembly, homopentamer.

The enzyme catalyses (2S)-2-hydroxy-3-oxobutyl phosphate + 5-amino-6-(D-ribitylamino)uracil = 6,7-dimethyl-8-(1-D-ribityl)lumazine + phosphate + 2 H2O + H(+). It functions in the pathway cofactor biosynthesis; riboflavin biosynthesis; riboflavin from 2-hydroxy-3-oxobutyl phosphate and 5-amino-6-(D-ribitylamino)uracil: step 1/2. Functionally, catalyzes the formation of 6,7-dimethyl-8-ribityllumazine by condensation of 5-amino-6-(D-ribitylamino)uracil with 3,4-dihydroxy-2-butanone 4-phosphate. This is the penultimate step in the biosynthesis of riboflavin. The sequence is that of 6,7-dimethyl-8-ribityllumazine synthase from Mycolicibacterium paratuberculosis (strain ATCC BAA-968 / K-10) (Mycobacterium paratuberculosis).